The following is a 701-amino-acid chain: Methionine--tRNA ligase (701 aa).

The 'HIGH' region motif lies at 13–23 (PYANGSIHLGH). The Zn(2+) site is built by Cys-144, Cys-147, Cys-157, and Cys-160. The 'KMSKS' region signature appears at 336-340 (KMSKS). Position 339 (Lys-339) interacts with ATP. In terms of domain architecture, tRNA-binding spans 600 to 701 (DFSKIDLRIA…SGAQPGMRVK (102 aa)).

It belongs to the class-I aminoacyl-tRNA synthetase family. MetG type 1 subfamily. In terms of assembly, homodimer. Zn(2+) serves as cofactor.

It is found in the cytoplasm. The catalysed reaction is tRNA(Met) + L-methionine + ATP = L-methionyl-tRNA(Met) + AMP + diphosphate. Its function is as follows. Is required not only for elongation of protein synthesis but also for the initiation of all mRNA translation through initiator tRNA(fMet) aminoacylation. The protein is Methionine--tRNA ligase of Nitrosomonas eutropha (strain DSM 101675 / C91 / Nm57).